We begin with the raw amino-acid sequence, 341 residues long: UDP-N-acetylenolpyruvoylglucosamine reductase (341 aa).

The FAD-binding PCMH-type domain occupies 13–185; sequence FGVEQSCLSM…TAVGLRLPKA (173 aa). Residue Arg-161 is part of the active site. Ser-231 acts as the Proton donor in catalysis. Glu-327 is a catalytic residue.

The protein belongs to the MurB family. The cofactor is FAD.

Its subcellular location is the cytoplasm. The catalysed reaction is UDP-N-acetyl-alpha-D-muramate + NADP(+) = UDP-N-acetyl-3-O-(1-carboxyvinyl)-alpha-D-glucosamine + NADPH + H(+). It functions in the pathway cell wall biogenesis; peptidoglycan biosynthesis. Functionally, cell wall formation. The polypeptide is UDP-N-acetylenolpyruvoylglucosamine reductase (Shewanella sp. (strain MR-4)).